We begin with the raw amino-acid sequence, 173 residues long: Translocon-associated protein subunit delta (173 aa).

A signal peptide spans 1–23 (MAAMASFGALALLLLSGLSCCSA). The Lumenal portion of the chain corresponds to 24–144 (EACLEPQITP…SVDHRGTWNG (121 aa)). Cys26 and Cys57 are oxidised to a cystine. Lys73 is covalently cross-linked (Glycyl lysine isopeptide (Lys-Gly) (interchain with G-Cter in ubiquitin)). Residues 145–165 (PWVSTEVLAAAIGIVIYYLAF) form a helical membrane-spanning segment. Topologically, residues 166–173 (SAKSHIQA) are cytoplasmic.

This sequence belongs to the TRAP-delta family. As to quaternary structure, heterotetramer of TRAP-alpha, TRAP-beta, TRAP-delta and TRAP-gamma.

The protein resides in the endoplasmic reticulum membrane. Functionally, TRAP proteins are part of a complex whose function is to bind calcium to the ER membrane and thereby regulate the retention of ER resident proteins. The sequence is that of Translocon-associated protein subunit delta (Ssr4) from Rattus norvegicus (Rat).